The sequence spans 557 residues: Interferon alpha/beta receptor 1 (557 aa).

Positions 1–27 are cleaved as a signal peptide; sequence MMVVLLGATTLVLVAVAPWVLSAAAGG. At 28–436 the chain is on the extracellular side; sequence KNLKSPQKVE…EKTKPGNTSK (409 aa). Fibronectin type-III domains follow at residues 32–126, 127–227, 231–329, and 331–432; these read SPQK…FRKA, QIGP…TVEN, PPEN…TEIQ, and FLLP…TKPG. Residues Asn-50, Asn-58, Asn-81, Asn-88, Asn-110, and Asn-172 are each glycosylated (N-linked (GlcNAc...) asparagine). The cysteines at positions 79 and 87 are disulfide-linked. A disulfide bond links Cys-199 and Cys-220. N-linked (GlcNAc...) asparagine glycosylation is present at Asn-254. Cys-283 and Cys-291 are oxidised to a cystine. Residues Asn-313, Asn-314, Asn-376, Asn-416, and Asn-433 are each glycosylated (N-linked (GlcNAc...) asparagine). Cys-403 and Cys-426 are disulfide-bonded. A helical membrane pass occupies residues 437 to 457; that stretch reads IWLIVGICIALFALPFVIYAA. Residues 458 to 557 are Cytoplasmic-facing; it reads KVFLRCINYV…TSEELQQDFV (100 aa). Cys-463 carries S-palmitoyl cysteine lipidation. Residues Tyr-466 and Tyr-481 each carry the phosphotyrosine; by TYK2 modification. The important for interaction with TYK2 stretch occupies residues 491-500; that stretch reads LLSTSEEQIE. The residue at position 495 (Ser-495) is a Phosphoserine. Residues Lys-501, Lys-525, and Lys-526 each participate in a glycyl lysine isopeptide (Lys-Gly) (interchain with G-Cter in ubiquitin) cross-link. Residues 516–557 form a disordered region; that stretch reads ETNQTDEDHKKYSSQTSQDSGNYSNEDESESKTSEELQQDFV. The span at 528–539 shows a compositional bias: polar residues; it reads SSQTSQDSGNYS. At Ser-535 the chain carries Phosphoserine.

This sequence belongs to the type II cytokine receptor family. In terms of assembly, heterodimer with IFNAR2; forming the receptor for type I interferon. Interacts with TYK2. Interacts with STAT1 and STAT2; the interaction requires its phosphorylation at Tyr-466. Interacts (serine-phosphorylated form) with FBXW11, the substrate recognition component of a SCF (SKP1-CUL1-F-box protein) E3 ubiquitin-protein ligase complex. Interacts with SHMT2; this promotes interaction with ABRAXAS2 and the BRISC complex. Interacts with TRIM10; this interaction prevents association between IFNAR1 and TYK2. In terms of processing, ubiquitinated, leading to its internalization and degradation. Polyubiquitinated via 'Lys-48'-linked and 'Lys-63'-linked ubiquitin chains, leading to receptor internalization and lysosomal degradation. The 'Lys-63'-linked ubiquitin chains are cleaved off by the BRISC complex. Phosphorylated on tyrosine residues in response to interferon-binding: phosphorylation by TYK2 tyrosine kinase creates docking sites for STAT proteins. Phosphorylated on serine residues in response to interferon binding; this promotes interaction with FBXW11 and ubiquitination. Post-translationally, palmitoylation at Cys-463 is required for the activation of STAT1 and STAT2. IFN receptors are present in all tissues and even on the surface of most IFN-resistant cells. Isoform 1, isoform 2 and isoform 3 are expressed in the IFN-alpha sensitive myeloma cell line U266B1. Isoform 2 and isoform 3 are expressed in the IFN-alpha resistant myeloma cell line U266R. Isoform 1 is not expressed in IFN-alpha resistant myeloma cell line U266R.

Its subcellular location is the cell membrane. It is found in the late endosome. The protein resides in the lysosome. Its function is as follows. Together with IFNAR2, forms the heterodimeric receptor for type I interferons (including interferons alpha, beta, epsilon, omega and kappa). Type I interferon binding activates the JAK-STAT signaling cascade, resulting in transcriptional activation or repression of interferon-regulated genes that encode the effectors of the interferon response. Mechanistically, type I interferon-binding brings the IFNAR1 and IFNAR2 subunits into close proximity with one another, driving their associated Janus kinases (JAKs) (TYK2 bound to IFNAR1 and JAK1 bound to IFNAR2) to cross-phosphorylate one another. The activated kinases phosphorylate specific tyrosine residues on the intracellular domains of IFNAR1 and IFNAR2, forming docking sites for the STAT transcription factors. STAT proteins are then phosphorylated by the JAKs, promoting their translocation into the nucleus to regulate expression of interferon-regulated genes. Can also act independently of IFNAR2: form an active IFNB1 receptor by itself and activate a signaling cascade that does not involve activation of the JAK-STAT pathway. In Homo sapiens (Human), this protein is Interferon alpha/beta receptor 1 (IFNAR1).